We begin with the raw amino-acid sequence, 234 residues long: Mediator of RNA polymerase II transcription subunit 4 (234 aa).

A coiled-coil region spans residues 71–124; it reads HQEAYRRLVEKKNEVAGLEMRVRGLVKRLEEGRKELEGMIDQGERSLEDIQKSE. Positions 188-234 are disordered; that stretch reads GVVGEEQKAPQKVEERREHVEHEESGRRYDPNAVFQLDLNSDESDED. Positions 189–217 are enriched in basic and acidic residues; sequence VVGEEQKAPQKVEERREHVEHEESGRRYD.

It belongs to the Mediator complex subunit 4 family. In terms of assembly, component of the Mediator complex.

It localises to the nucleus. Its function is as follows. Component of the Mediator complex, a coactivator involved in the regulated transcription of nearly all RNA polymerase II-dependent genes. Mediator functions as a bridge to convey information from gene-specific regulatory proteins to the basal RNA polymerase II transcription machinery. Mediator is recruited to promoters by direct interactions with regulatory proteins and serves as a scaffold for the assembly of a functional preinitiation complex with RNA polymerase II and the general transcription factors. This is Mediator of RNA polymerase II transcription subunit 4 (MED4) from Cryptococcus neoformans var. neoformans serotype D (strain B-3501A) (Filobasidiella neoformans).